Consider the following 858-residue polypeptide: Neurofilament medium polypeptide (858 aa).

Ser2 carries the N-acetylserine modification. The head stretch occupies residues 2–99 (SYTMEPLGNP…KLSRSNEKEQ (98 aa)). Residues 22-57 (ATYSRASASPSSGFRSQSWSRGSGSTVSSSYKRTNL) form a disordered region. Residues 30 to 54 (SPSSGFRSQSWSRGSGSTVSSSYKR) are compositionally biased toward low complexity. O-linked (GlcNAc) threonine glycosylation is present at Thr47. The IF rod domain occupies 96-407 (EKEQLQGLND…KLLEGEETRF (312 aa)). The tract at residues 100 to 131 (LQGLNDRFAGYIEKVHYLEQQNKEIEAELAAL) is coil 1A. A linker 1 region spans residues 132-144 (RQKHAGRAQLGDA). The coil 1B stretch occupies residues 145–243 (YEQELRELRG…EEEVAELLAQ (99 aa)). Positions 244 to 260 (LQASHATVERKDYLKTD) are linker 12. Positions 261–282 (LTTALKEIRAQLECQSDHNMHQ) are coil 2A. The interval 283–286 (AEEW) is linker 2. The segment at 287–407 (FKCRYAKLTE…KLLEGEETRF (121 aa)) is coil 2B. Positions 408–858 (SAFSGSITGP…SHAVVKEIKE (451 aa)) are tail. Residue Thr427 is glycosylated (O-linked (GlcNAc) threonine). The segment at 478–788 (AAKAQEEEQE…VVTNGLDVSP (311 aa)) is disordered. 2 stretches are compositionally biased toward acidic residues: residues 484–500 (EEQE…EEEA) and 509–524 (AAEE…EEEE). The segment covering 525–541 (AAKSDAAEEGGSKKEEI) has biased composition (basic and acidic residues). The segment covering 542-555 (EEKEEGEEAEEEEA) has biased composition (acidic residues). The span at 556–572 (EAKGKAEEAGAKVEKVK) shows a compositional bias: basic and acidic residues. A compositionally biased stretch (pro residues) spans 576-586 (AKSPPKSPPKS). The span at 590–601 (EQAKAVQKAAAE) shows a compositional bias: low complexity. The span at 602–623 (VGKDQKAEKAAEKAAKEEKAAS) shows a compositional bias: basic and acidic residues. Residues 624 to 637 (PEKPATPKVTSPEK) show a composition bias toward low complexity. 2 stretches are compositionally biased toward basic and acidic residues: residues 651 to 664 (ITPE…KPTT) and 675 to 727 (ASPE…KAVV). Positions 728-743 (EESITVTKVTKVTAEV) are enriched in low complexity. A compositionally biased stretch (basic and acidic residues) spans 744 to 771 (EVSKEARKEDIAVNGEVEEKKDEAKEKE).

This sequence belongs to the intermediate filament family. In terms of processing, there are a number of repeats of the tripeptide K-S-P, NFM is phosphorylated on a number of the serines in this motif. It is thought that phosphorylation of NFM results in the formation of interfilament cross bridges that are important in the maintenance of axonal caliber. Post-translationally, phosphorylation seems to play a major role in the functioning of the larger neurofilament polypeptides (NF-M and NF-H), the levels of phosphorylation being altered developmentally and coincident with a change in the neurofilament function.

It localises to the cytoplasm. The protein resides in the cytoskeleton. It is found in the cell projection. The protein localises to the axon. Neurofilaments usually contain three intermediate filament proteins: NEFL, NEFM, and NEFH which are involved in the maintenance of neuronal caliber. May additionally cooperate with other neuronal intermediate filament proteins to form neuronal filamentous networks. This chain is Neurofilament medium polypeptide (NEFM), found in Gallus gallus (Chicken).